The sequence spans 64 residues: Alternative prion protein (64 aa).

The tract at residues Met-1 to Ser-22 is disordered. Polar residues predominate over residues Thr-11 to Ser-22. The chain crosses the membrane as a helical span at residues Trp-40 to Trp-58.

It localises to the mitochondrion outer membrane. The polypeptide is Alternative prion protein (Ovis aries (Sheep)).